A 105-amino-acid polypeptide reads, in one-letter code: UPF0145 protein Mevan_1624 (105 aa).

It belongs to the UPF0145 family.

The sequence is that of UPF0145 protein Mevan_1624 from Methanococcus vannielii (strain ATCC 35089 / DSM 1224 / JCM 13029 / OCM 148 / SB).